The following is a 204-amino-acid chain: Guanylate kinase (204 aa).

One can recognise a Guanylate kinase-like domain in the interval 4 to 182 (GMLVVVSGPS…AVNDLEAVLT (179 aa)). 11 to 18 (GPSGAGKG) is a binding site for ATP.

The protein belongs to the guanylate kinase family.

The protein resides in the cytoplasm. The enzyme catalyses GMP + ATP = GDP + ADP. Functionally, essential for recycling GMP and indirectly, cGMP. The polypeptide is Guanylate kinase (Carboxydothermus hydrogenoformans (strain ATCC BAA-161 / DSM 6008 / Z-2901)).